Here is a 478-residue protein sequence, read N- to C-terminus: MSVTKSARSPQVATPLNLDLPESAKKLQSQDPSPANGSSSESSKKTKGITGFQTLVHLVKGNMGTGILGLPLAVKNAGILMGPLSLLVMGLIACHCMHILVRCAQRFCHRLNKPFMDYGDTVMHGLAFSPNAWLQNHAHWGRRVVSFFLIVTQLGFCCVYIVFLADNLKQVVEAVNSTTISCHKNETVVLTPTMDSRLYMLSFLPVLGLLVFVRNLRVLTIFSLLANISMLVSLVIIAQYIIQEIPDASQLPLVASWKTYPLFFGTAIFSFESIGVVLPLENKMKDARGFPTILSLGMSIITTLYIAIGALGYLRFGDDIKASITLNLPNCWLYQSVKLLYVVGILCTYALQFYVPAEIIIPLAVSQVSKRWALPVDLSIRLALVCLTCMLAILIPRLDLVLSLVGSVSSSALALIIPPLLEVVTYYGEGISPLTVTKDALISILGFMGFVVGTYQALDELIKSGNSPALSNSTMFIQ.

2 stretches are compositionally biased toward polar residues: residues 1–14 (MSVT…QVAT) and 26–37 (KLQSQDPSPANG). The tract at residues 1–46 (MSVTKSARSPQVATPLNLDLPESAKKLQSQDPSPANGSSSESSKKT) is disordered. Topologically, residues 1–53 (MSVTKSARSPQVATPLNLDLPESAKKLQSQDPSPANGSSSESSKKTKGITGFQ) are cytoplasmic. A helical membrane pass occupies residues 54-74 (TLVHLVKGNMGTGILGLPLAV). Over 75–76 (KN) the chain is Extracellular. A helical membrane pass occupies residues 77–97 (AGILMGPLSLLVMGLIACHCM). Topologically, residues 98 to 143 (HILVRCAQRFCHRLNKPFMDYGDTVMHGLAFSPNAWLQNHAHWGRR) are cytoplasmic. The helical transmembrane segment at 144-164 (VVSFFLIVTQLGFCCVYIVFL) threads the bilayer. Topologically, residues 165–192 (ADNLKQVVEAVNSTTISCHKNETVVLTP) are extracellular. A helical transmembrane segment spans residues 193-213 (TMDSRLYMLSFLPVLGLLVFV). Over 214 to 217 (RNLR) the chain is Cytoplasmic. The chain crosses the membrane as a helical span at residues 218-238 (VLTIFSLLANISMLVSLVIIA). The Extracellular segment spans residues 239-259 (QYIIQEIPDASQLPLVASWKT). Residues 260–280 (YPLFFGTAIFSFESIGVVLPL) form a helical membrane-spanning segment. Topologically, residues 281 to 292 (ENKMKDARGFPT) are cytoplasmic. The helical transmembrane segment at 293–313 (ILSLGMSIITTLYIAIGALGY) threads the bilayer. Residues 314–340 (LRFGDDIKASITLNLPNCWLYQSVKLL) are Extracellular-facing. Residues 341 to 361 (YVVGILCTYALQFYVPAEIII) form a helical membrane-spanning segment. At 362–374 (PLAVSQVSKRWAL) the chain is on the cytoplasmic side. Residues 375 to 395 (PVDLSIRLALVCLTCMLAILI) form a helical membrane-spanning segment. Topologically, residues 396-399 (PRLD) are extracellular. The helical transmembrane segment at 400-420 (LVLSLVGSVSSSALALIIPPL) threads the bilayer. The Cytoplasmic portion of the chain corresponds to 421 to 441 (LEVVTYYGEGISPLTVTKDAL). The chain crosses the membrane as a helical span at residues 442–462 (ISILGFMGFVVGTYQALDELI). At 463 to 478 (KSGNSPALSNSTMFIQ) the chain is on the extracellular side.

Belongs to the amino acid/polyamine transporter 2 family. Expressed in spinal cord, brain, testis, lung, heart, colon, spleen, kidney and muscle. Found in neuronal cell bodies in the anterior horn, in spinal cord brain stem, cerebellum, hippocampus, hypothalamus, rhinencephalon, cerebral cortex, and olfactory bulb in the brain. Also expressed in bone and fat tissues.

The protein localises to the cell membrane. It is found in the endoplasmic reticulum membrane. The protein resides in the recycling endosome membrane. The catalysed reaction is glycine(in) + H(+)(in) = glycine(out) + H(+)(out). It catalyses the reaction L-alanine(in) + H(+)(in) = L-alanine(out) + H(+)(out). It carries out the reaction D-alanine(in) + H(+)(in) = D-alanine(out) + H(+)(out). The enzyme catalyses L-proline(out) + H(+)(out) = L-proline(in) + H(+)(in). The catalysed reaction is D-proline(out) + H(+)(out) = D-proline(in) + H(+)(in). It catalyses the reaction 4-hydroxy-L-proline(in) + H(+)(in) = 4-hydroxy-L-proline(out) + H(+)(out). It carries out the reaction L-serine(in) + H(+)(in) = L-serine(out) + H(+)(out). The enzyme catalyses D-serine(out) + H(+)(out) = D-serine(in) + H(+)(in). The catalysed reaction is beta-alanine(in) + H(+)(in) = beta-alanine(out) + H(+)(out). It catalyses the reaction 4-aminobutanoate(in) + H(+)(in) = 4-aminobutanoate(out) + H(+)(out). It carries out the reaction sarcosine(in) + H(+)(in) = sarcosine(out) + H(+)(out). The enzyme catalyses N,N-dimethylglycine(in) + H(+)(in) = N,N-dimethylglycine(out) + H(+)(out). Electrogenic proton/amino acid symporter with a high selectivity for the small side chains amino acids glycine, alanine and proline, where both L- and D-enantiomers are transported. Extension of the backbone length, as in beta-alanine and 4-aminobutanoate or methylation of the amino group, as in sarcosine and N,N-dimethylglycine, are also tolerated but decrease transport efficiency. A free carboxyl group is preferred. The polypeptide is Proton-coupled amino acid transporter 2 (Mus musculus (Mouse)).